The sequence spans 355 residues: S-adenosylmethionine:tRNA ribosyltransferase-isomerase (355 aa).

Belongs to the QueA family. As to quaternary structure, monomer.

Its subcellular location is the cytoplasm. It catalyses the reaction 7-aminomethyl-7-carbaguanosine(34) in tRNA + S-adenosyl-L-methionine = epoxyqueuosine(34) in tRNA + adenine + L-methionine + 2 H(+). It functions in the pathway tRNA modification; tRNA-queuosine biosynthesis. In terms of biological role, transfers and isomerizes the ribose moiety from AdoMet to the 7-aminomethyl group of 7-deazaguanine (preQ1-tRNA) to give epoxyqueuosine (oQ-tRNA). The chain is S-adenosylmethionine:tRNA ribosyltransferase-isomerase from Pectobacterium atrosepticum (strain SCRI 1043 / ATCC BAA-672) (Erwinia carotovora subsp. atroseptica).